A 65-amino-acid polypeptide reads, in one-letter code: Small ribosomal subunit protein bS21 (65 aa).

It belongs to the bacterial ribosomal protein bS21 family.

This is Small ribosomal subunit protein bS21 from Geobacter sp. (strain M21).